The sequence spans 575 residues: Acetylcholine receptor subunit beta-type acr-2 (575 aa).

The signal sequence occupies residues 1–20 (MKKTVKILLILITVFLKVHC). Topologically, residues 21–270 (NGGHDDEAAD…IRRKTLFYTV (250 aa)) are extracellular. A disordered region spans residues 31–57 (FLSHTNIDDPNNSSDPNKNSDQGDTMG). Residues 38–50 (DDPNNSSDPNKNS) are compositionally biased toward low complexity. N-linked (GlcNAc...) asparagine glycans are attached at residues Asn-41, Asn-42, Asn-80, and Asn-131. Residues Cys-185 and Cys-199 are joined by a disulfide bond. Transmembrane regions (helical) follow at residues 271-291 (ILII…YLPV), 299-319 (LTIS…KILP), and 331-351 (LLLA…IVNI). At 352–527 (YFRSALSHKM…WKYVAMVLDR (176 aa)) the chain is on the cytoplasmic side. Residues 528–548 (LILLIFFGVTLGGTLGIICSA) form a helical membrane-spanning segment.

It belongs to the ligand-gated ion channel (TC 1.A.9) family. Acetylcholine receptor (TC 1.A.9.1) subfamily. As to quaternary structure, component of nicotinic acetylcholine receptor. In cholinergic motoneurons, composed of 2 non-alpha subunits acr-2 and acr-3, and 3 alpha subunits unc-38, unc-63 and acr-12. As to expression, specifically expressed in cholinergic ventral cord motoneurons of the VA, VB, DA and DB classes but not AS and VC classes. Expressed in PVQ and DVC neurons in the tail.

Its subcellular location is the postsynaptic cell membrane. It is found in the cell membrane. Functionally, non-alpha subunit of nicotinic acetylcholine receptor (nAChR). Acts in cholinergic motoneurons to regulate presynaptic neurotransmitter release, thereby ensuring normal level of excitation of cholinergic motoneurons during locomotion. This is Acetylcholine receptor subunit beta-type acr-2 (acr-2) from Caenorhabditis elegans.